Reading from the N-terminus, the 177-residue chain is TRAF-interacting protein with FHA domain-containing protein A (177 aa).

The 57-residue stretch at V48 to L104 folds into the FHA domain.

The protein belongs to the TIFA family. As to quaternary structure, interacts with traf6.

It is found in the cytoplasm. In terms of biological role, adapter molecule that plays a key role in the activation of pro-inflammatory NF-kappa-B signaling following detection of bacterial pathogen-associated molecular pattern metabolites (PAMPs). Promotes activation of an innate immune response by inducing the oligomerization and polyubiquitination of TRAF6, which leads to the activation of TAK1 and IKK through a proteasome-independent mechanism. This is TRAF-interacting protein with FHA domain-containing protein A from Xenopus tropicalis (Western clawed frog).